Here is a 215-residue protein sequence, read N- to C-terminus: Octanoyltransferase (215 aa).

Residues 42–215 (QNTPDEIWLL…AEKLKARLKQ (174 aa)) form the BPL/LPL catalytic domain. Substrate contacts are provided by residues 81 to 88 (RGGQITYH), 148 to 150 (ALG), and 161 to 163 (GLA). C179 serves as the catalytic Acyl-thioester intermediate.

Belongs to the LipB family.

It localises to the cytoplasm. The catalysed reaction is octanoyl-[ACP] + L-lysyl-[protein] = N(6)-octanoyl-L-lysyl-[protein] + holo-[ACP] + H(+). It participates in protein modification; protein lipoylation via endogenous pathway; protein N(6)-(lipoyl)lysine from octanoyl-[acyl-carrier-protein]: step 1/2. Catalyzes the transfer of endogenously produced octanoic acid from octanoyl-acyl-carrier-protein onto the lipoyl domains of lipoate-dependent enzymes. Lipoyl-ACP can also act as a substrate although octanoyl-ACP is likely to be the physiological substrate. The chain is Octanoyltransferase from Nitrosospira multiformis (strain ATCC 25196 / NCIMB 11849 / C 71).